A 147-amino-acid chain; its full sequence is Large ribosomal subunit protein uL13 (147 aa).

It belongs to the universal ribosomal protein uL13 family. In terms of assembly, part of the 50S ribosomal subunit.

This protein is one of the early assembly proteins of the 50S ribosomal subunit, although it is not seen to bind rRNA by itself. It is important during the early stages of 50S assembly. This chain is Large ribosomal subunit protein uL13, found in Pseudarthrobacter chlorophenolicus (strain ATCC 700700 / DSM 12829 / CIP 107037 / JCM 12360 / KCTC 9906 / NCIMB 13794 / A6) (Arthrobacter chlorophenolicus).